Reading from the N-terminus, the 403-residue chain is tRNA(Met) cytidine acetate ligase (403 aa).

Residues 7–20 (VVEY…HAYH), G101, N164, and 189–190 (RI) contribute to the ATP site.

Belongs to the TmcAL family.

The protein localises to the cytoplasm. It carries out the reaction cytidine(34) in elongator tRNA(Met) + acetate + ATP = N(4)-acetylcytidine(34) in elongator tRNA(Met) + AMP + diphosphate. Its function is as follows. Catalyzes the formation of N(4)-acetylcytidine (ac(4)C) at the wobble position of elongator tRNA(Met), using acetate and ATP as substrates. First activates an acetate ion to form acetyladenylate (Ac-AMP) and then transfers the acetyl group to tRNA to form ac(4)C34. The chain is tRNA(Met) cytidine acetate ligase from Lysinibacillus sphaericus (strain C3-41).